The primary structure comprises 70 residues: PDKYRVVYTDYQRLELEKEFHYSRYITMNRKAELAKSLDLTERQIKIWFQNRRAKERKINKKKDVMVKEP.

Residues 1-60 (PDKYRVVYTDYQRLELEKEFHYSRYITMNRKAELAKSLDLTERQIKIWFQNRRAKERKIN) constitute a DNA-binding region (homeobox).

This sequence belongs to the Caudal homeobox family.

It localises to the nucleus. This chain is Homeobox protein CDX (CDX), found in Lineus sanguineus (Ribbon worm).